The sequence spans 93 residues: UPF0213 protein CPE1444 (93 aa).

A GIY-YIG domain is found at 1-75 (MNYVYILKCK…KKLTRNQKLQ (75 aa)).

This sequence belongs to the UPF0213 family.

In Clostridium perfringens (strain 13 / Type A), this protein is UPF0213 protein CPE1444.